Consider the following 201-residue polypeptide: Peptide deformylase (201 aa).

The disordered stretch occupies residues 1–21 (MANHFSQLAKKSRTNGNAEKI). 2 residues coordinate Fe cation: C121 and H163. Residue E164 is part of the active site. H167 is a binding site for Fe cation.

It belongs to the polypeptide deformylase family. Fe(2+) is required as a cofactor.

The enzyme catalyses N-terminal N-formyl-L-methionyl-[peptide] + H2O = N-terminal L-methionyl-[peptide] + formate. Removes the formyl group from the N-terminal Met of newly synthesized proteins. Requires at least a dipeptide for an efficient rate of reaction. N-terminal L-methionine is a prerequisite for activity but the enzyme has broad specificity at other positions. This Prochlorococcus marinus (strain AS9601) protein is Peptide deformylase.